Reading from the N-terminus, the 123-residue chain is Small ribosomal subunit protein uS12 (123 aa).

The segment at 1 to 23 is disordered; that stretch reads MPTISQLVKKGREKVEKKTKSPA. Asp89 carries the 3-methylthioaspartic acid modification.

It belongs to the universal ribosomal protein uS12 family. Part of the 30S ribosomal subunit. Contacts proteins S8 and S17. May interact with IF1 in the 30S initiation complex.

With S4 and S5 plays an important role in translational accuracy. Functionally, interacts with and stabilizes bases of the 16S rRNA that are involved in tRNA selection in the A site and with the mRNA backbone. Located at the interface of the 30S and 50S subunits, it traverses the body of the 30S subunit contacting proteins on the other side and probably holding the rRNA structure together. The combined cluster of proteins S8, S12 and S17 appears to hold together the shoulder and platform of the 30S subunit. The polypeptide is Small ribosomal subunit protein uS12 (Thermodesulfovibrio yellowstonii (strain ATCC 51303 / DSM 11347 / YP87)).